Here is a 152-residue protein sequence, read N- to C-terminus: MNDNFLNIQIECCLYKQTPSIDKFKFWIKSIFLHFKKVSEINLRLVEKKEIKNLNKKFLKKNYPTNILAFPCIMPNNDQISFLGDLVVCSEIVEKEAKNQNKSVESHWAHIIIHGTLHLLGYDHSNNSNKIEEMEILEIKFLNLFGYHNPYF.

Residues His114, His118, and His124 each coordinate Zn(2+).

The protein belongs to the endoribonuclease YbeY family. Zn(2+) serves as cofactor.

Its subcellular location is the cytoplasm. Functionally, single strand-specific metallo-endoribonuclease involved in late-stage 70S ribosome quality control and in maturation of the 3' terminus of the 16S rRNA. The chain is Endoribonuclease YbeY from Wigglesworthia glossinidia brevipalpis.